A 98-amino-acid chain; its full sequence is NADH-ubiquinone oxidoreductase chain 4L (98 aa).

A run of 3 helical transmembrane segments spans residues 1 to 21, 29 to 49, and 58 to 78; these read MTPV…GLAF, ALLC…LWAL, and VAPM…LALL.

The protein belongs to the complex I subunit 4L family.

It localises to the mitochondrion membrane. It carries out the reaction a ubiquinone + NADH + 5 H(+)(in) = a ubiquinol + NAD(+) + 4 H(+)(out). In terms of biological role, core subunit of the mitochondrial membrane respiratory chain NADH dehydrogenase (Complex I) which catalyzes electron transfer from NADH through the respiratory chain, using ubiquinone as an electron acceptor. Part of the enzyme membrane arm which is embedded in the lipid bilayer and involved in proton translocation. The chain is NADH-ubiquinone oxidoreductase chain 4L (MT-ND4L) from Salmo salar (Atlantic salmon).